Here is a 62-residue protein sequence, read N- to C-terminus: UPF0434 protein FTM_0733 (62 aa).

The protein belongs to the UPF0434 family.

The protein is UPF0434 protein FTM_0733 of Francisella tularensis subsp. mediasiatica (strain FSC147).